A 156-amino-acid polypeptide reads, in one-letter code: Snaclec A1 (156 aa).

Residues 1–23 (MGRSISVSFGLLVVFLSLSGTGA) form the signal peptide. Intrachain disulfides connect Cys27–Cys38, Cys55–Cys154, and Cys129–Cys146. The C-type lectin domain occupies 34–155 (HEGHCYKVFN…CGQPYRFTCE (122 aa)).

It belongs to the snaclec family. In terms of assembly, heterodimer; disulfide-linked. Expressed by the venom gland.

It localises to the secreted. Interferes with one step of hemostasis (modulation of platelet aggregation, or coagulation cascade, for example). This Macrovipera lebetinus (Levantine viper) protein is Snaclec A1.